A 106-amino-acid chain; its full sequence is SH3 domain-binding glutamic acid-rich-like protein 2-B (106 aa).

The SH3-binding signature appears at 61 to 67 (QGNPLPP).

Belongs to the SH3BGR family.

Its subcellular location is the nucleus. The sequence is that of SH3 domain-binding glutamic acid-rich-like protein 2-B (sh3bgrl2-b) from Xenopus laevis (African clawed frog).